The primary structure comprises 522 residues: Putative zinc finger protein 286B (522 aa).

Residues 1 to 30 (METDLAEMPEKGVLSSQDSPHFQEKSTEEG) are disordered. 10 C2H2-type zinc fingers span residues 244-266 (HKCN…QRVH), 272-294 (YTCN…QRTH), 299-321 (FECR…QRIH), 327-349 (YECN…QLIH), 355-377 (YECN…QRTH), 383-405 (YKCQ…QRVH), 411-433 (YECS…QRIH), 439-461 (YECS…QRIH), 467-489 (YKCS…QRTH), and 495-517 (FRCN…QRVH).

The protein belongs to the krueppel C2H2-type zinc-finger protein family.

The protein resides in the nucleus. Its function is as follows. May be involved in transcriptional regulation. The chain is Putative zinc finger protein 286B (ZNF286B) from Homo sapiens (Human).